The following is a 205-amino-acid chain: Putative glutamine amidotransferase-like protein L716 (205 aa).

One can recognise a Glutamine amidotransferase type-1 domain in the interval 1-176 (MLLIIQNGYI…SNHIESYDYA (176 aa)). Residues Cys82, His155, and Asp157 each act as for GATase activity in the active site.

This chain is Putative glutamine amidotransferase-like protein L716, found in Acanthamoeba polyphaga mimivirus (APMV).